Reading from the N-terminus, the 615-residue chain is MPIQVLPPQLANQIAAGEVVERPASVVKELVENSLDAGATRIDIDIERGGAKLIRIRDNGCGIKKDELALALARHATSKIASLDDLEAIISLGFRGEALASISSVSRLTLTSRTAEQQEAWQAYAEGRDMNVTVKPAAHPVGTTLEVLDLFYNTPARRKFLRTEKTEFNHIDEIIRRIALARFDVTINLSHNGKIVRQYRAVPEGGQKERRLGAICGTAFLEQALAIEWQHGDLTLRGWVADPNHTTPALAEIQYCYVNGRMMRDRLINHAIRQACEDKLGADQQPAFVLYLEIDPHQVDVNVHPAKHEVRFHQSRLVHDFIYQGVLSVLQQQLETPLPLDDEPQPAPRSIPENRVAAGRNHFAEPAAREPVAPRYTPAPASGSRPAAPWPNAQPGYQKQQGEVYRQLLQTPAPMQKLKAPEPQEPALAANSQSFGRVLTIVHSDCALLERDGNISLLALPVAERWLRQVQLTPGEAPVCAQPLLIPLRLKVSGEEKSALEKAQSALAELGIDFQSDAQHVTIRAVPLPLRQQNLQILIPELIGYLAKQSVFEPGNIAQWIARNLMSEHAQWSMAQAITLLADVERLCPQLVKTPPGGLLQSVDLHPAIKALKDE.

Residues 363-397 form a disordered region; that stretch reads FAEPAAREPVAPRYTPAPASGSRPAAPWPNAQPGY. Residues 364-391 show a composition bias toward low complexity; it reads AEPAAREPVAPRYTPAPASGSRPAAPWP.

The protein belongs to the DNA mismatch repair MutL/HexB family.

In terms of biological role, this protein is involved in the repair of mismatches in DNA. It is required for dam-dependent methyl-directed DNA mismatch repair. May act as a 'molecular matchmaker', a protein that promotes the formation of a stable complex between two or more DNA-binding proteins in an ATP-dependent manner without itself being part of a final effector complex. The protein is DNA mismatch repair protein MutL of Shigella boydii serotype 18 (strain CDC 3083-94 / BS512).